A 3471-amino-acid polypeptide reads, in one-letter code: Abnormal spindle-like microcephaly-associated protein homolog (3471 aa).

Residues 1–26 (MANRRVGRGCWEVSPTERRPPAAEEE) form a disordered region. A phosphoserine mark is found at serine 274, serine 277, serine 361, serine 386, and serine 419. The segment covering 555–564 (EVTPSSTTAS) has biased composition (polar residues). The disordered stretch occupies residues 555-576 (EVTPSSTTASVARKRKSDGSME). Residue serine 599 is modified to Phosphoserine. Residues 914–1050 (KASKEILLAF…LLWKIAFAFQ (137 aa)) form the Calponin-homology (CH) 1 domain. A coiled-coil region spans residues 1051–1072 (VDISLNLDQLKEEIAFLKHTKS). Serine 1097 is modified (phosphoserine). The region spanning 1104–1255 (SENIKLLMDW…YLSFLCARLL (152 aa)) is the Calponin-homology (CH) 2 domain. IQ domains lie at 1341–1372 (QNKA…IILQ), 1387–1416 (YLWA…MLKS), 1576–1607 (LKKT…VIIQ), 1599–1628 (MKKA…KTRS), 1626–1655 (TRSA…SVIK), 1649–1678 (ILTS…ATIK), 1722–1751 (MRES…AVIS), 1745–1776 (QRKA…IVIQ), 1795–1824 (VKKA…AALK), 1818–1847 (QSIA…SIIK), 1868–1897 (TKAA…AALK), 1891–1922 (EHQA…LVIQ), 1941–1972 (LRHA…IIIQ), 1964–1995 (QHKC…LLIQ), 2014–2043 (TKAA…AAVT), 2037–2068 (CNKA…IIIQ), 2087–2118 (LKKT…TFIK), 2110–2141 (MHRA…IVIQ), 2160–2191 (ILKA…TLIQ), 2183–2212 (MQIA…ITKT), 2233–2264 (LRHS…TLIQ), 2256–2287 (MHIA…IWIQ), 2305–2336 (VQNA…TFIQ), 2378–2409 (QRHS…TLIQ), 2401–2432 (MHSS…IFVQ), 2451–2482 (LRKS…VLIQ), 2524–2555 (QWHS…IIIQ), 2659–2690 (RTQA…TLIQ), 2682–2713 (MHRA…VVIQ), 2732–2761 (VQKS…EKMA), 2853–2884 (QKRA…VVLQ), 2903–2932 (IRSS…STIK), 2926–2957 (IKNS…KIQA), 2948–2979 (KVKA…KIIQ), 3023–3054 (RHRA…LVIQ), 3073–3104 (FKKS…RLLH), 3134–3163 (QVNS…SIKK), 3175–3204 (QNRA…GIIK), and 3198–3229 (FTSG…IRLS).

The protein resides in the cytoplasm. Its subcellular location is the cytoskeleton. The protein localises to the spindle. It is found in the nucleus. Probable role in mitotic spindle regulation and coordination of mitotic processes. May have a preferential role in regulating neurogenesis. This is Abnormal spindle-like microcephaly-associated protein homolog (ASPM) from Pongo pygmaeus (Bornean orangutan).